A 347-amino-acid polypeptide reads, in one-letter code: NADH-ubiquinone oxidoreductase chain 2 (347 aa).

The next 10 helical transmembrane spans lie at 1-21 (MNPL…LIVM), 25-45 (HWFM…PLLT), 67-87 (SMLL…WSIM), 111-131 (FHFW…LILL), 144-164 (MIMP…SIAI), 178-198 (IMAY…AYNP), 201-221 (TLLN…LLMI), 237-257 (LPLI…LPPL), 274-294 (SSII…YFYT), and 326-346 (LPLM…MPIL).

Belongs to the complex I subunit 2 family. Core subunit of respiratory chain NADH dehydrogenase (Complex I) which is composed of 45 different subunits. Interacts with TMEM242.

Its subcellular location is the mitochondrion inner membrane. It catalyses the reaction a ubiquinone + NADH + 5 H(+)(in) = a ubiquinol + NAD(+) + 4 H(+)(out). Core subunit of the mitochondrial membrane respiratory chain NADH dehydrogenase (Complex I) which catalyzes electron transfer from NADH through the respiratory chain, using ubiquinone as an electron acceptor. Essential for the catalytic activity and assembly of complex I. This is NADH-ubiquinone oxidoreductase chain 2 from Myotis simus (Velvety myotis).